A 161-amino-acid chain; its full sequence is Troponin C, slow skeletal and cardiac muscles (161 aa).

At Met-1 the chain carries N-acetylmethionine. EF-hand domains follow at residues 16–51, 52–87, 92–127, and 128–161; these read QKNE…LGQN, PTPE…CMKD, KSEE…TGET, and ITED…KGVE. The Ca(2+) site is built by Asp-65, Asp-67, Ser-69, Thr-71, and Glu-76. Ser-98 is subject to Phosphoserine. Residues Asp-105, Asn-107, Asp-109, Tyr-111, Glu-116, Asp-141, Asn-143, Asp-145, Arg-147, and Glu-152 each contribute to the Ca(2+) site.

This sequence belongs to the troponin C family.

In terms of biological role, troponin is the central regulatory protein of striated muscle contraction. Tn consists of three components: Tn-I which is the inhibitor of actomyosin ATPase, Tn-T which contains the binding site for tropomyosin and Tn-C. The binding of calcium to Tn-C abolishes the inhibitory action of Tn on actin filaments. The chain is Troponin C, slow skeletal and cardiac muscles (TNNC1) from Homo sapiens (Human).